Consider the following 401-residue polypeptide: Phosphoglycerate kinase 3, cytosolic (401 aa).

(2R)-3-phosphoglycerate is bound by residues V24, D25, N27, R41, S63, H64, G66, R67, R122, H154, and R155. Position 200 (G200) interacts with ADP. Residue G200 participates in CDP binding. Positions 202 and 206 each coordinate AMP. K206 contributes to the ATP binding site. ADP is bound at residue G224. Residue G224 coordinates CDP. 2 residues coordinate AMP: G225 and G297. ATP-binding residues include G225, G297, and N321. 2 residues coordinate CDP: G322 and F327. Position 327 (F327) interacts with ADP. E328 lines the AMP pocket. ATP-binding residues include E328, D359, and S360. D359 is a Mg(2+) binding site.

It belongs to the phosphoglycerate kinase family. Monomer. Requires Mg(2+) as cofactor. In terms of tissue distribution, expressed in roots, leaves and inflorescence.

The protein localises to the cytoplasm. The catalysed reaction is (2R)-3-phosphoglycerate + ATP = (2R)-3-phospho-glyceroyl phosphate + ADP. It functions in the pathway carbohydrate degradation; glycolysis; pyruvate from D-glyceraldehyde 3-phosphate: step 2/5. The protein is Phosphoglycerate kinase 3, cytosolic of Arabidopsis thaliana (Mouse-ear cress).